A 672-amino-acid polypeptide reads, in one-letter code: MKKDSESNSSDKSNKEELSTGRRGGNPMIIALVITVLAAMLFFNQPEPSSLISASFFRSQLEKNNIESVEIGDIEVSGTFKTRPQMPASESADGDAKPKELLKRFRFTRPAGADYAVQLSEDLEKRNIKDWKFSPPDNTAAILNLLILVGLPLAIFFFIFMMIRRTRNDMMGGGFLSGFSKSPAKRFEATDKVITFNDVAGLEGVKADLQEIVDFLKTPEKFQKLGGQVPKGVLLNGPPGTGKTLLARAVAGEADVPFFSVNGSEFIQMFVGVGASRVRDLFKTAKEQSPSIIFIDEIDAVGRQRGAGLGGGHDEREQTLNQILGEMDGFGGAQAVIVIAATNRPDVLDPALLRPGRFDRHVTVGRPTMKGREEIFKVHVRDVPLGDDVDLHRLAAGTVGLTGADIRNMVNEAALWAARGDKKIVEMSDFDYARDKILMGAKREEVLLESEKEKTAYHEAGHTLTAWHLEGSHIVHKVTIIPRGRALGVTQYVPNEDRLSMSKRELEHQLIVLLGGRAAEKIIYTETCVGAENDLERATSIARRMVTHWGMSPKIGPVSYKTSDEDPFLGREIHQQRQFSEHTQELIDEEVARILMEADQKAEQLLREHRGQLETITRELLDREELNEAELTELIGPSIHKRLGDEEGKVEQIMAPEGAAERTSNASARRED.

The disordered stretch occupies residues 1 to 22; that stretch reads MKKDSESNSSDKSNKEELSTGR. Residues 1 to 23 lie on the Cytoplasmic side of the membrane; sequence MKKDSESNSSDKSNKEELSTGRR. A helical transmembrane segment spans residues 24–44; it reads GGNPMIIALVITVLAAMLFFN. The Periplasmic portion of the chain corresponds to 45–141; sequence QPEPSSLISA…KFSPPDNTAA (97 aa). The chain crosses the membrane as a helical span at residues 142–162; it reads ILNLLILVGLPLAIFFFIFMM. At 163-672 the chain is on the cytoplasmic side; it reads IRRTRNDMMG…TSNASARRED (510 aa). 237–244 contacts ATP; the sequence is GPPGTGKT. His458 serves as a coordination point for Zn(2+). Glu459 is a catalytic residue. Positions 462 and 534 each coordinate Zn(2+). Residues 642–672 form a disordered region; sequence RLGDEEGKVEQIMAPEGAAERTSNASARRED. A compositionally biased stretch (polar residues) spans 662–672; the sequence is RTSNASARRED.

The protein in the central section; belongs to the AAA ATPase family. It in the C-terminal section; belongs to the peptidase M41 family. As to quaternary structure, homohexamer. The cofactor is Zn(2+).

It localises to the cell inner membrane. Its function is as follows. Acts as a processive, ATP-dependent zinc metallopeptidase for both cytoplasmic and membrane proteins. Plays a role in the quality control of integral membrane proteins. The polypeptide is ATP-dependent zinc metalloprotease FtsH 1 (Rhodopirellula baltica (strain DSM 10527 / NCIMB 13988 / SH1)).